Reading from the N-terminus, the 249-residue chain is Mediator of RNA polymerase II transcription subunit 8 (249 aa).

Residues 1–26 (MQREEKQLDMLLEAVLNRLNDLKHSI) are a coiled coil. Polar residues-rich tracts occupy residues 215–224 (SPMSAVSPSG) and 235–249 (IKTN…HPYR). The tract at residues 215–249 (SPMSAVSPSGNAPMGKMPSGIKTNIKSANQVHPYR) is disordered.

Belongs to the Mediator complex subunit 8 family. As to quaternary structure, component of the Mediator complex.

The protein localises to the nucleus. Its function is as follows. Component of the Mediator complex, a coactivator involved in the regulated transcription of nearly all RNA polymerase II-dependent genes. Mediator functions as a bridge to convey information from gene-specific regulatory proteins to the basal RNA polymerase II transcription machinery. Mediator is recruited to promoters by direct interactions with regulatory proteins and serves as a scaffold for the assembly of a functional preinitiation complex with RNA polymerase II and the general transcription factors. The sequence is that of Mediator of RNA polymerase II transcription subunit 8 (MED8) from Anopheles gambiae (African malaria mosquito).